A 250-amino-acid polypeptide reads, in one-letter code: MTNQKQTTHFGFKSVDWNEKEKKVAEVFHSVAKNYDRMNDLMSLGIHHLWKRYTIELSHVRPGQSVLDLAGGSGDLTRLLSQKVGDSGQVILADINAAMLHVGRDRLLDEGLFKNIRYVQGNAQCLPFADNSFHCITMGFGLRNVTDKDEALQSMYRVCKPGGKLMVLEFSTPVFPGLKPVYDWYSFNILPKIGKFVANDEASYQYLAESIRMHPDQETLKAMIERVGFEDCHYHNLSGGIVALHIAYKY.

Residues Ser73, Asp94, and 122–123 (NA) each bind S-adenosyl-L-methionine.

The protein belongs to the class I-like SAM-binding methyltransferase superfamily. MenG/UbiE family.

The enzyme catalyses a 2-demethylmenaquinol + S-adenosyl-L-methionine = a menaquinol + S-adenosyl-L-homocysteine + H(+). The catalysed reaction is a 2-methoxy-6-(all-trans-polyprenyl)benzene-1,4-diol + S-adenosyl-L-methionine = a 5-methoxy-2-methyl-3-(all-trans-polyprenyl)benzene-1,4-diol + S-adenosyl-L-homocysteine + H(+). Its pathway is quinol/quinone metabolism; menaquinone biosynthesis; menaquinol from 1,4-dihydroxy-2-naphthoate: step 2/2. The protein operates within cofactor biosynthesis; ubiquinone biosynthesis. Functionally, methyltransferase required for the conversion of demethylmenaquinol (DMKH2) to menaquinol (MKH2) and the conversion of 2-polyprenyl-6-methoxy-1,4-benzoquinol (DDMQH2) to 2-polyprenyl-3-methyl-6-methoxy-1,4-benzoquinol (DMQH2). The protein is Ubiquinone/menaquinone biosynthesis C-methyltransferase UbiE of Legionella pneumophila (strain Lens).